A 362-amino-acid chain; its full sequence is Severin (362 aa).

Residues 53-102 (FKVVPVPESSYGKFYDGDSYIILHTFKEGNSLKHDIHFFLGTFTTQDEAG) form a Gelsolin-like 1 repeat. 162 to 170 (RLLHISGDK) contacts a 1,2-diacyl-sn-glycero-3-phospho-(1D-myo-inositol-4,5-bisphosphate). Gelsolin-like repeat units follow at residues 172 to 212 (AKVA…QEKN) and 280 to 323 (LKFS…NEKK).

This sequence belongs to the villin/gelsolin family.

In terms of biological role, severin blocks the ends of F-actin and causes the fragmentation and depolymerization of actin filaments in a Ca(2+) dependent manner. This Dictyostelium discoideum (Social amoeba) protein is Severin (sevA).